A 369-amino-acid chain; its full sequence is Trichocyst matrix protein T1-B (369 aa).

Positions 1–16 (MYKLAVCTLLILSVTA) are cleaved as a signal peptide. The propeptide occupies 17-55 (IDVTNSVWTSHDQKAFAQIKQSGWGNFILNFGELHLQTG). Positions 56–180 (GILAELNTEI…AIDESLQLLS (125 aa)) form a coiled coil. Positions 190–225 (IQKVQKNLTKIQQSLKRHSTFQTFIKTLLEIAVEAN) are excised as a propeptide. A coiled-coil region spans residues 262–354 (KDFEARVIQL…AHQALDLLNQ (93 aa)).

It belongs to the TMP family. Post-translationally, two components are produced by post-translational processing from the precursor peptide.

The protein localises to the trichocyst. Structural protein that crystallize inside the trichocyst matrix. This chain is Trichocyst matrix protein T1-B (T1B), found in Paramecium tetraurelia.